A 362-amino-acid polypeptide reads, in one-letter code: MSTASVMDLVRDDLRAFAGYASARTSALQGDVWLNANESAWGNPADPDASTRRYPDPQPKGLRAALAQLYGCAPEQLLIGRGSDEAIDLLVRGLCVPERDAVVVTPPVFGMYAVCARLQNAPLVEVPLVDGADGLHADVPVIVQAALDAKAKLVFLCSPSNPAGSAIPLAEIEVALQALQGKAVVVVDEAYGEFSDVPSAIGLLARYDNLAVLRTLSKAHALAAARIGSLIANAELIALLRRCQAPYPVPTPCAVMAEQALSAPALAVTQRRVTEIRAERARLHAALVQVAGVRQVYPSQGNFLLVRFDDAEAAFQALLEAGVVVRDQRAVPRLSDALRITIGTPEQNDRVLGALQRKQEAA.

Residue lysine 218 is modified to N6-(pyridoxal phosphate)lysine.

Belongs to the class-II pyridoxal-phosphate-dependent aminotransferase family. Histidinol-phosphate aminotransferase subfamily. Homodimer. The cofactor is pyridoxal 5'-phosphate.

The enzyme catalyses L-histidinol phosphate + 2-oxoglutarate = 3-(imidazol-4-yl)-2-oxopropyl phosphate + L-glutamate. It participates in amino-acid biosynthesis; L-histidine biosynthesis; L-histidine from 5-phospho-alpha-D-ribose 1-diphosphate: step 7/9. This Xanthomonas campestris pv. campestris (strain B100) protein is Histidinol-phosphate aminotransferase.